The primary structure comprises 282 residues: Acetylglutamate kinase (282 aa).

Residues 62–63, Arg84, and Asn178 each bind substrate; that span reads GG.

Belongs to the acetylglutamate kinase family. ArgB subfamily.

It is found in the cytoplasm. It catalyses the reaction N-acetyl-L-glutamate + ATP = N-acetyl-L-glutamyl 5-phosphate + ADP. The protein operates within amino-acid biosynthesis; L-arginine biosynthesis; N(2)-acetyl-L-ornithine from L-glutamate: step 2/4. In terms of biological role, catalyzes the ATP-dependent phosphorylation of N-acetyl-L-glutamate. The chain is Acetylglutamate kinase from Kosmotoga olearia (strain ATCC BAA-1733 / DSM 21960 / TBF 19.5.1).